Consider the following 600-residue polypeptide: MSMRTEYCGLVTEHLLGQTVSLCGWVQRRRDHGGVIFIDLRDREGLVQVVCDPDRAEMFATAEGVRNEFCVQIKGLVRNRPEGTVNAGLKSGKIEVLCHELNVLNASVTPPFQLDDDNLSETTRLTHRVLDLRRPQMQHNLRLRYRVAIEARKYLDEQGFIDIETPMLTKSTPEGARDYLVPSRVNAGQFFALPQSPQLFKQLLMVANFDRYYQITKCFRDEDLRADRQPEFTQIDCETSFLGEQEIRDLFEDMIRHIFKTTIDVELDAKFPVMPYSEAMARFGSDKPDLRVQLEFTELTDAMKDVDFKVFSTPANAKDGRVAALRVPKGGELSRGDIDGYTEFVRIYGAKGLAWIKVNEKAKGRDGLQSPIVKNLHDASIAAILERTGAEDGDIIFFAADRAKVVNDSLGALRLKIGHSEFGKANGLVQAGWKPLWVVDFPMFEYDDEDARYVAAHHPFTSPKDEHLEYLETDPGRCLAKAYDMVLNGWEIGGGSVRIHREEVQSKVFRALKIGAEEAQAKFGFLLDALQYGAPPHGGIAFGLDRIVTMMAGADSIRDVIAFPKTQRAQDLLTQAPSPVDERQLRELHIRLRQPEQPKA.

L-aspartate is bound at residue E174. The tract at residues 198-201 is aspartate; that stretch reads QLFK. R220 is an L-aspartate binding site. Residues 220–222 and Q229 contribute to the ATP site; that span reads RDE. H457 contacts L-aspartate. E491 contributes to the ATP binding site. L-aspartate is bound at residue R498. 543–546 contacts ATP; the sequence is GLDR.

This sequence belongs to the class-II aminoacyl-tRNA synthetase family. Type 1 subfamily. Homodimer.

It localises to the cytoplasm. It carries out the reaction tRNA(Asx) + L-aspartate + ATP = L-aspartyl-tRNA(Asx) + AMP + diphosphate. Functionally, aspartyl-tRNA synthetase with relaxed tRNA specificity since it is able to aspartylate not only its cognate tRNA(Asp) but also tRNA(Asn). Reaction proceeds in two steps: L-aspartate is first activated by ATP to form Asp-AMP and then transferred to the acceptor end of tRNA(Asp/Asn). This Burkholderia cenocepacia (strain ATCC BAA-245 / DSM 16553 / LMG 16656 / NCTC 13227 / J2315 / CF5610) (Burkholderia cepacia (strain J2315)) protein is Aspartate--tRNA(Asp/Asn) ligase.